Consider the following 87-residue polypeptide: Small ribosomal subunit protein bS20 (87 aa).

Over residues 1–12 the composition is skewed to basic residues; it reads MANHKSALKRNR. Positions 1–21 are disordered; that stretch reads MANHKSALKRNRQAAVRNARN.

The protein belongs to the bacterial ribosomal protein bS20 family.

Functionally, binds directly to 16S ribosomal RNA. The protein is Small ribosomal subunit protein bS20 of Syntrophotalea carbinolica (strain DSM 2380 / NBRC 103641 / GraBd1) (Pelobacter carbinolicus).